Here is a 309-residue protein sequence, read N- to C-terminus: Malate dehydrogenase (309 aa).

NAD(+) contacts are provided by residues 7–12 (GAGHVG) and Asp-32. Substrate contacts are provided by Arg-81 and Arg-87. NAD(+) contacts are provided by residues Asn-94 and 117–119 (VSN). Positions 119 and 150 each coordinate substrate. The Proton acceptor role is filled by His-174.

The protein belongs to the LDH/MDH superfamily. MDH type 3 family.

It catalyses the reaction (S)-malate + NAD(+) = oxaloacetate + NADH + H(+). Its function is as follows. Catalyzes the reversible oxidation of malate to oxaloacetate. This is Malate dehydrogenase from Chlorobium phaeovibrioides (strain DSM 265 / 1930) (Prosthecochloris vibrioformis (strain DSM 265)).